Consider the following 460-residue polypeptide: MWQFRVFLLLMSTWGISSIPAHPDPVFSSSEHAHQVLRVRRANSFLEEMRPGSLERECMEEICDFEEAQEIFQNVEDTLAFWIKYFDGDQCSAPPLDHQCDSPCCGHGTCIDGIGSFSCSCDKGWEGKFCQQELRFQDCRVNNGGCLHYCLEESNGRRCACAPGYELADDHMRCKSTVNFPCGKLGRWIEKKRKILKRDTDLEDELEPDPRIVNGTLTKQGDSPWQAILLDSKKKLACGGVLIHTSWVLTAAHCVEGTKKLTVRLGEYDLRRRDHWELDLDIKEILVHPNYTRSSSDNDIALLRLAQPATLSKTIVPICLPNNGLAQELTQAGQETVVTGWGYQSDRIKDGRRNRTFILTFIRIPLVARNECVEVMKNVVSENMLCAGIIGDTRDACDGDSGGPMVVFFRGTWFLVGLVSWGEGCGHTNNYGIYTKVGSYLKWIHSYIGEKGVSLKSQKL.

The first 18 residues, 1–18 (MWQFRVFLLLMSTWGISS), serve as a signal peptide directing secretion. Positions 19 to 41 (IPAHPDPVFSSSEHAHQVLRVRR) are excised as a propeptide. A Gla domain is found at 42 to 87 (ANSFLEEMRPGSLERECMEEICDFEEAQEIFQNVEDTLAFWIKYFD). 4-carboxyglutamate occurs at positions 47, 48, 55, 57, 60, 61, 66, 67, 70, and 76. A disulfide bridge links Cys-58 with Cys-63. Cystine bridges form between Cys-91–Cys-110, Cys-100–Cys-105, Cys-104–Cys-119, Cys-121–Cys-130, Cys-139–Cys-150, Cys-146–Cys-159, Cys-161–Cys-174, Cys-182–Cys-319, and Cys-238–Cys-254. EGF-like domains follow at residues 96–131 (LDHQ…KFCQ) and 135–175 (RFQD…MRCK). Asp-112 bears the (3R)-3-hydroxyaspartate mark. In terms of domain architecture, Peptidase S1 spans 213–449 (VNGTLTKQGD…YLKWIHSYIG (237 aa)). Asn-214 carries N-linked (GlcNAc...) asparagine glycosylation. His-253 (charge relay system) is an active-site residue. Asn-290 carries N-linked (GlcNAc...) asparagine glycosylation. The active-site Charge relay system is Asp-299. Asn-354 carries an N-linked (GlcNAc...) asparagine glycan. 2 cysteine pairs are disulfide-bonded: Cys-372–Cys-386 and Cys-397–Cys-425. Residue Ser-401 is the Charge relay system of the active site.

This sequence belongs to the peptidase S1 family. Synthesized as a single chain precursor, which is cleaved into a light chain and a heavy chain held together by a disulfide bond. The enzyme is then activated by thrombin, which cleaves a tetradecapeptide from the amino end of the heavy chain; this reaction, which occurs at the surface of endothelial cells, is strongly promoted by thrombomodulin. Post-translationally, the vitamin K-dependent, enzymatic carboxylation of some Glu residues allows the modified protein to bind calcium. The iron and 2-oxoglutarate dependent 3-hydroxylation of aspartate and asparagine is (R) stereospecific within EGF domains. As to expression, plasma; synthesized in the liver.

Its subcellular location is the secreted. It localises to the golgi apparatus. The protein resides in the endoplasmic reticulum. It catalyses the reaction Degradation of blood coagulation factors Va and VIIIa.. Its function is as follows. Protein C is a vitamin K-dependent serine protease that regulates blood coagulation by inactivating factors Va and VIIIa in the presence of calcium ions and phospholipids. Exerts a protective effect on the endothelial cell barrier function. This chain is Vitamin K-dependent protein C (Proc), found in Mus musculus (Mouse).